Here is a 293-residue protein sequence, read N- to C-terminus: 1D-myo-inositol 2-acetamido-2-deoxy-alpha-D-glucopyranoside deacetylase 2 (293 aa).

Residues H6, D9, and H142 each coordinate Zn(2+).

The protein belongs to the MshB deacetylase family. It depends on Zn(2+) as a cofactor.

The enzyme catalyses 1D-myo-inositol 2-acetamido-2-deoxy-alpha-D-glucopyranoside + H2O = 1D-myo-inositol 2-amino-2-deoxy-alpha-D-glucopyranoside + acetate. Functionally, catalyzes the deacetylation of 1D-myo-inositol 2-acetamido-2-deoxy-alpha-D-glucopyranoside (GlcNAc-Ins) in the mycothiol biosynthesis pathway. The polypeptide is 1D-myo-inositol 2-acetamido-2-deoxy-alpha-D-glucopyranoside deacetylase 2 (Frankia alni (strain DSM 45986 / CECT 9034 / ACN14a)).